A 60-amino-acid polypeptide reads, in one-letter code: Translational regulator CsrA (60 aa).

The protein belongs to the CsrA/RsmA family. In terms of assembly, homodimer; the beta-strands of each monomer intercalate to form a hydrophobic core, while the alpha-helices form wings that extend away from the core.

The protein resides in the cytoplasm. In terms of biological role, a key translational regulator that binds mRNA to regulate translation initiation and/or mRNA stability. Mediates global changes in gene expression, shifting from rapid growth to stress survival by linking envelope stress, the stringent response and the catabolite repression systems. Usually binds in the 5'-UTR; binding at or near the Shine-Dalgarno sequence prevents ribosome-binding, repressing translation, binding elsewhere in the 5'-UTR can activate translation and/or stabilize the mRNA. Its function is antagonized by small RNA(s). This Histophilus somni (strain 2336) (Haemophilus somnus) protein is Translational regulator CsrA.